The sequence spans 236 residues: Small ribosomal subunit protein uS2c (236 aa).

It belongs to the universal ribosomal protein uS2 family.

It localises to the plastid. Its subcellular location is the chloroplast. The sequence is that of Small ribosomal subunit protein uS2c (rps2) from Saccharum hybrid (Sugarcane).